A 162-amino-acid chain; its full sequence is Protein mmf1, mitochondrial (162 aa).

The protein belongs to the RutC family.

It is found in the mitochondrion. Its subcellular location is the cytoplasm. Plays a role in the maintenance of mitochondrial DNA. In Schizosaccharomyces pombe (strain 972 / ATCC 24843) (Fission yeast), this protein is Protein mmf1, mitochondrial (mmf1).